Here is a 496-residue protein sequence, read N- to C-terminus: Putative BTB/POZ domain and WD-repeat protein R61 (496 aa).

The 71-residue stretch at 8 to 78 (SNINLILNDE…MFSDIDIYKN (71 aa)) folds into the BTB domain. WD repeat units lie at residues 149-189 (KFPR…FNSK), 208-248 (IFDN…KEFQ), 250-285 (DYKI…RKVL), 291-330 (KSIG…IIKW), 333-371 (VSKS…KILE), and 422-464 (MYFS…DIIY).

Belongs to the mimivirus BTB/WD family.

This is Putative BTB/POZ domain and WD-repeat protein R61 from Acanthamoeba polyphaga (Amoeba).